The following is a 421-amino-acid chain: Imidazolonepropionase (421 aa).

Fe(3+) is bound by residues His-81 and His-83. Positions 81 and 83 each coordinate Zn(2+). 4-imidazolone-5-propanoate contacts are provided by Arg-90, Tyr-153, and His-186. Residue Tyr-153 coordinates N-formimidoyl-L-glutamate. His-251 provides a ligand contact to Fe(3+). A Zn(2+)-binding site is contributed by His-251. Glu-254 serves as a coordination point for 4-imidazolone-5-propanoate. Residue Asp-326 participates in Fe(3+) binding. Asp-326 contacts Zn(2+). The N-formimidoyl-L-glutamate site is built by Asn-328 and Gly-330. 4-imidazolone-5-propanoate is bound at residue Ser-331.

Belongs to the metallo-dependent hydrolases superfamily. HutI family. Zn(2+) serves as cofactor. Requires Fe(3+) as cofactor.

It localises to the cytoplasm. The enzyme catalyses 4-imidazolone-5-propanoate + H2O = N-formimidoyl-L-glutamate. Its pathway is amino-acid degradation; L-histidine degradation into L-glutamate; N-formimidoyl-L-glutamate from L-histidine: step 3/3. Catalyzes the hydrolytic cleavage of the carbon-nitrogen bond in imidazolone-5-propanoate to yield N-formimidoyl-L-glutamate. It is the third step in the universal histidine degradation pathway. This Streptococcus pyogenes serotype M28 (strain MGAS6180) protein is Imidazolonepropionase.